Consider the following 571-residue polypeptide: ATP-dependent RNA helicase RhlB (571 aa).

The short motif at valine 9 to alanine 37 is the Q motif element. A Helicase ATP-binding domain is found at leucine 40–leucine 220. ATP is bound at residue alanine 53–threonine 60. The short motif at aspartate 166–aspartate 169 is the DEAD box element. Residues arginine 231–leucine 393 enclose the Helicase C-terminal domain. Residues threonine 391–serine 558 are disordered. The span at glutamate 402–glycine 411 shows a compositional bias: acidic residues. The span at arginine 419 to arginine 432 shows a compositional bias: basic and acidic residues. The segment covering glycine 435–glycine 448 has biased composition (gly residues). Positions glycine 449–proline 460 are enriched in basic and acidic residues. The segment covering valine 483 to alanine 497 has biased composition (low complexity). The span at proline 503 to glycine 512 shows a compositional bias: basic residues. The segment covering valine 539–serine 558 has biased composition (low complexity).

This sequence belongs to the DEAD box helicase family. RhlB subfamily. As to quaternary structure, component of the RNA degradosome, which is a multiprotein complex involved in RNA processing and mRNA degradation.

The protein localises to the cytoplasm. The catalysed reaction is ATP + H2O = ADP + phosphate + H(+). Functionally, DEAD-box RNA helicase involved in RNA degradation. Has RNA-dependent ATPase activity and unwinds double-stranded RNA. This is ATP-dependent RNA helicase RhlB from Xanthomonas axonopodis pv. citri (strain 306).